We begin with the raw amino-acid sequence, 249 residues long: DNA repair protein RecO (249 aa).

Belongs to the RecO family.

Involved in DNA repair and RecF pathway recombination. The polypeptide is DNA repair protein RecO (Lactobacillus delbrueckii subsp. bulgaricus (strain ATCC 11842 / DSM 20081 / BCRC 10696 / JCM 1002 / NBRC 13953 / NCIMB 11778 / NCTC 12712 / WDCM 00102 / Lb 14)).